A 1657-amino-acid polypeptide reads, in one-letter code: Alsin (1657 aa).

RCC1 repeat units follow at residues 59 to 108, 109 to 167, and 169 to 218; these read DGEV…AVTD, NGVA…ALSI, and REIW…ALVQ. Residues 432–480 are disordered; the sequence is TGAQAGSSAIGPEGLKDSREEQVKQESMQGKKSSSLVDIREEETEGGSR. The span at 445–455 shows a compositional bias: basic and acidic residues; sequence GLKDSREEQVK. Positions 456 to 467 are enriched in polar residues; the sequence is QESMQGKKSSSL. Phosphoserine occurs at positions 465, 466, 483, and 492. T510 is subject to Phosphothreonine. RCC1 repeat units lie at residues 525–576 and 578–627; these read RTEV…ALTA and SQVY…FLVD. K533 is subject to N6-acetyllysine. Positions 690 to 885 constitute a DH domain; sequence GYIASLHELA…ECLALHLGRK (196 aa). A PH domain is found at 901–1007; the sequence is GKMTDSLRKP…RAISQAVDQA (107 aa). 8 MORN repeats span residues 1049–1071, 1072–1094, 1100–1122, 1123–1145, 1151–1173, 1175–1197, 1198–1220, and 1221–1244; these read YDGR…DGKM, YSGM…NKAM, YVGH…SGEV, FEGC…KLTS, FIGQ…TRGE, YMGM…FGLY, YEGN…DDTI, and YEGE…NGDY. S1335 is modified (phosphoserine). One can recognise a VPS9 domain in the interval 1513–1657; it reads KQPDIALLGF…YYQIQREKLN (145 aa).

In terms of assembly, forms a heteromeric complex with ALS2CL. Interacts with ALS2CL.

Its function is as follows. May act as a GTPase regulator. Controls survival and growth of spinal motoneurons. The polypeptide is Alsin (ALS2) (Homo sapiens (Human)).